The sequence spans 82 residues: UPF0248 protein Mevan_1298 (82 aa).

It belongs to the UPF0248 family.

The protein is UPF0248 protein Mevan_1298 of Methanococcus vannielii (strain ATCC 35089 / DSM 1224 / JCM 13029 / OCM 148 / SB).